The chain runs to 428 residues: Gamma-glutamyl phosphate reductase (428 aa).

It belongs to the gamma-glutamyl phosphate reductase family.

It is found in the cytoplasm. The enzyme catalyses L-glutamate 5-semialdehyde + phosphate + NADP(+) = L-glutamyl 5-phosphate + NADPH + H(+). Its pathway is amino-acid biosynthesis; L-proline biosynthesis; L-glutamate 5-semialdehyde from L-glutamate: step 2/2. Catalyzes the NADPH-dependent reduction of L-glutamate 5-phosphate into L-glutamate 5-semialdehyde and phosphate. The product spontaneously undergoes cyclization to form 1-pyrroline-5-carboxylate. The protein is Gamma-glutamyl phosphate reductase of Mesorhizobium japonicum (strain LMG 29417 / CECT 9101 / MAFF 303099) (Mesorhizobium loti (strain MAFF 303099)).